Here is a 372-residue protein sequence, read N- to C-terminus: Glutamate 5-kinase (372 aa).

K6 lines the ATP pocket. S46, D133, and N145 together coordinate substrate. ATP is bound by residues 165–166 (TD) and 207–213 (TGGMYTK). Positions 272–350 (NGFLFVDEGA…HDIESILGYK (79 aa)) constitute a PUA domain.

This sequence belongs to the glutamate 5-kinase family.

Its subcellular location is the cytoplasm. It catalyses the reaction L-glutamate + ATP = L-glutamyl 5-phosphate + ADP. It participates in amino-acid biosynthesis; L-proline biosynthesis; L-glutamate 5-semialdehyde from L-glutamate: step 1/2. In terms of biological role, catalyzes the transfer of a phosphate group to glutamate to form L-glutamate 5-phosphate. The polypeptide is Glutamate 5-kinase (Caldanaerobacter subterraneus subsp. tengcongensis (strain DSM 15242 / JCM 11007 / NBRC 100824 / MB4) (Thermoanaerobacter tengcongensis)).